The chain runs to 185 residues: ATP-dependent protease subunit HslV (185 aa).

Threonine 13 is an active-site residue. The Na(+) site is built by glycine 167, cysteine 170, and threonine 173.

The protein belongs to the peptidase T1B family. HslV subfamily. A double ring-shaped homohexamer of HslV is capped on each side by a ring-shaped HslU homohexamer. The assembly of the HslU/HslV complex is dependent on binding of ATP.

The protein resides in the cytoplasm. The catalysed reaction is ATP-dependent cleavage of peptide bonds with broad specificity.. With respect to regulation, allosterically activated by HslU binding. Functionally, protease subunit of a proteasome-like degradation complex believed to be a general protein degrading machinery. The protein is ATP-dependent protease subunit HslV of Sinorhizobium medicae (strain WSM419) (Ensifer medicae).